Reading from the N-terminus, the 127-residue chain is Vacuolar ATPase assembly integral membrane protein VMA21 (127 aa).

A disordered region spans residues 1-28 (MATRRNPTKESITTSPPPDQQPRQPGEL). At 1–45 (MATRRNPTKESITTSPPPDQQPRQPGELEHREAIQLRDLPGYPQQ) the chain is on the cytoplasmic side. A helical membrane pass occupies residues 46-66 (VLWKLIIYSIAVLVLPLSAYF). Residues 67–79 (YSVNYVFDGNTTY) are Lumenal-facing. A helical membrane pass occupies residues 80–100 (AGATAAITANLILFSYIVVAM). Residues 101-127 (REDKGDQEQLREQQQLRGNKEETKKMK) are Cytoplasmic-facing. Residues 107–127 (QEQLREQQQLRGNKEETKKMK) form a disordered region. Residues 118–127 (GNKEETKKMK) show a composition bias toward basic and acidic residues. The short motif at 124 to 127 (KKMK) is the Prevents secretion from ER element.

The protein belongs to the VMA21 family.

It localises to the endoplasmic reticulum membrane. The protein resides in the endoplasmic reticulum-Golgi intermediate compartment membrane. Its subcellular location is the cytoplasmic vesicle. The protein localises to the COPII-coated vesicle membrane. Required for the assembly of the V0 complex of the vacuolar ATPase (V-ATPase) in the endoplasmic reticulum. This Coccidioides immitis (strain RS) (Valley fever fungus) protein is Vacuolar ATPase assembly integral membrane protein VMA21.